A 449-amino-acid polypeptide reads, in one-letter code: Putative methylthiotransferase MJ0865 (449 aa).

A Radical SAM core domain is found at 163–390 (SIRGANVYIE…EGEYRKLGLS (228 aa)). 3 residues coordinate [4Fe-4S] cluster: Cys177, Cys181, and Cys184.

It belongs to the methylthiotransferase family. It depends on [4Fe-4S] cluster as a cofactor.

This is Putative methylthiotransferase MJ0865 from Methanocaldococcus jannaschii (strain ATCC 43067 / DSM 2661 / JAL-1 / JCM 10045 / NBRC 100440) (Methanococcus jannaschii).